We begin with the raw amino-acid sequence, 583 residues long: Orphan steroid hormone receptor 2 (583 aa).

A DNA-binding region (nuclear receptor) is located at residues 84-159; that stretch reads IELCAVCGDK…MGMKSDSVQC (76 aa). NR C4-type zinc fingers lie at residues 87–107 and 123–142; these read CAVC…CEGC and CRGN…CQYC. Positions 248 to 563 constitute an NR LBD domain; the sequence is TLASVVTSLA…SIIPYILRME (316 aa).

It belongs to the nuclear hormone receptor family. NR2 subfamily. In terms of assembly, binds DNA as a monomer. Expressed uniformly in the early embryo. In contrast, larval expression is localized to the epaulettes and mouth epithelium. Expressed in multiple adult organs including lantern muscle, tubefeet, intestine, coelomocytes and gonads. In the adult ovaries and testes, expression is specifically localized to the smooth muscle epithelial layer of cells which surround the ovarioles and acini, respectively (at protein level).

The protein localises to the cytoplasm. The protein resides in the nucleus. Its function is as follows. Orphan nuclear receptor. Binds to the hormone response element in the upstream promoter region of the CYIIIB gene in vitro. Both isoform 1 and isoform 2 bind DNA. The chain is Orphan steroid hormone receptor 2 from Strongylocentrotus purpuratus (Purple sea urchin).